The sequence spans 385 residues: MNKDQKQLRIGIVAGELSGDILGEGLIKALKKHFPDAIFEGIAGPKMQAQGCNTLYDMDELSVMGLVEVLGRLPRLLKIRKQLVQHFIDNPPDVFIGIDAPDFNLRVEKPLKDAGIKTVQYVSPSVWAWREKRIHTISAATNLVLALLPFEKEFYDKHQVPCTFVGHTLADDIALEHDDSKARKELGLSPDDKVLALLPGSRGSEVGLLSETYIKTAVQLQAQNPALKIVVPLVNAKRKAQFTEILNATAPTLKISLLDGQSKQAMQAADAILLASGTATLEGMLYKKPMVVGYKIKPLSYWIFKTLFTFNIKYFSLPNLLADEELVPEFLQSECNVANLTQALTPMLNTDNQALKARFLAIHKKIRLNASEQAANAVAELINAN.

It belongs to the LpxB family.

The enzyme catalyses a lipid X + a UDP-2-N,3-O-bis[(3R)-3-hydroxyacyl]-alpha-D-glucosamine = a lipid A disaccharide + UDP + H(+). It participates in bacterial outer membrane biogenesis; LPS lipid A biosynthesis. Functionally, condensation of UDP-2,3-diacylglucosamine and 2,3-diacylglucosamine-1-phosphate to form lipid A disaccharide, a precursor of lipid A, a phosphorylated glycolipid that anchors the lipopolysaccharide to the outer membrane of the cell. The chain is Lipid-A-disaccharide synthase from Pseudoalteromonas translucida (strain TAC 125).